Here is a 77-residue protein sequence, read N- to C-terminus: Protein NS4 (77 aa).

It localises to the host cytoplasm. It is found in the host nucleus. Its subcellular location is the host nucleolus. In terms of biological role, may function as a nucleic acid binding protein that modulates transcription of genes participating in the IFN response. This Antilocapra americana (Pronghorn) protein is Protein NS4 (Segment-9).